Here is a 98-residue protein sequence, read N- to C-terminus: uncharacterized protein (98 aa).

It belongs to the IS150/IS1296 orfA family.

This is an uncharacterized protein from Haemophilus influenzae (strain ATCC 51907 / DSM 11121 / KW20 / Rd).